Reading from the N-terminus, the 283-residue chain is Pantothenate synthetase (283 aa).

30 to 37 (MGNLHDGH) contributes to the ATP binding site. The Proton donor role is filled by His37. Gln61 is a binding site for (R)-pantoate. Position 61 (Gln61) interacts with beta-alanine. 149–152 (GEKD) contributes to the ATP binding site. Position 155 (Gln155) interacts with (R)-pantoate. 186–189 (LSSR) is a binding site for ATP.

Belongs to the pantothenate synthetase family. In terms of assembly, homodimer.

It is found in the cytoplasm. The catalysed reaction is (R)-pantoate + beta-alanine + ATP = (R)-pantothenate + AMP + diphosphate + H(+). The protein operates within cofactor biosynthesis; (R)-pantothenate biosynthesis; (R)-pantothenate from (R)-pantoate and beta-alanine: step 1/1. Its function is as follows. Catalyzes the condensation of pantoate with beta-alanine in an ATP-dependent reaction via a pantoyl-adenylate intermediate. The sequence is that of Pantothenate synthetase from Escherichia coli (strain SMS-3-5 / SECEC).